Reading from the N-terminus, the 682-residue chain is MNPQQQRMAAIGTDKELSDLLDFSAMFSPPVNSGKTRPTTLGSSQFSGSGIDERGGTTSWGTSGQPSPSYDSSRGFTDSPHYSDHLNDSRLGAHEGLSPTPFMNSNLMGKTSERGSFSLYSRDTGLPGCQSSLLRQDLGLGSPAQLSSSGKPGTAYYSFSATSSRRRPLHDSAALDPLQAKKVRKVPPGLPSSVYAPSPNSDDFNRESPSYPSPKPPTSMFASTFFMQDGTHNSSDLWSSSNGMSQPGFGGILGTSTSHMSQSSSYGNLHSHDRLSYPPHSVSPTDINTSLPPMSSFHRGSTSSSPYVAASHTPPINGSDSILGTRGNAAGSSQTGDALGKALASIYSPDHTSSSFPSNPSTPVGSPSPLTGTSQWPRPGGQAPSSPSYENSLHSLQSRMEDRLDRLDDAIHVLRNHAVGPSTSLPAGHSDIHSLLGPSHNAPIGSLNSNYGGSSLVASSRSASMVGTHREDSVSLNGNHSVLSSTVTTSSTDLNHKTQENYRGGLQSQSGTVVTTEIKTENKEKDENLHEPPSSDDMKSDDESSQKDIKVSSRGRTSSTNEDEDLNPEQKIEREKERRMANNARERLRVRDINEAFKELGRMCQLHLKSEKPQTKLLILHQAVAVILSLEQQVRERNLNPKAACLKRREEEKVSAVSAEPPTTLPGTHPGLSETTNPMGHM.

Positions 19–27 match the 9aaTAD motif; sequence DLLDFSAMF. Disordered regions lie at residues 25–122, 140–219, and 281–313; these read AMFS…LYSR, LGSP…PPTS, and SVSP…ASHT. Composition is skewed to polar residues over residues 30–48 and 56–76; these read PVNS…QFSG and GTTS…SRGF. Residues S47, S67, and S79 each carry the phosphoserine modification. Positions 81-93 are enriched in basic and acidic residues; it reads HYSDHLNDSRLGA. Residue S98 is modified to Phosphoserine. 2 stretches are compositionally biased toward polar residues: residues 101–121 and 144–163; these read PFMN…SLYS and AQLS…SATS. A Glycyl lysine isopeptide (Lys-Gly) (interchain with G-Cter in SUMO2) cross-link involves residue K110. Residue S116 is modified to Phosphoserine. The leucine-zipper stretch occupies residues 119–140; that stretch reads LYSRDTGLPGCQSSLLRQDLGL. K181 is covalently cross-linked (Glycyl lysine isopeptide (Lys-Gly) (interchain with G-Cter in SUMO2)). Positions 182–196 are interaction with RUNX1T1; it reads KVRKVPPGLPSSVYA. Positions 282–306 are enriched in polar residues; sequence VSPTDINTSLPPMSSFHRGSTSSSP. T313 carries the phosphothreonine modification. Phosphoserine is present on S333. 2 disordered regions span residues 349–395 and 462–580; these read PDHT…SLHS and SASM…ERRM. Low complexity predominate over residues 352-363; that stretch reads TSSSFPSNPSTP. Polar residues-rich tracts occupy residues 364–376 and 383–395; these read VGSP…TSQW and APSS…SLHS. Residues 481–492 show a composition bias toward low complexity; that stretch reads SVLSSTVTTSST. Residues 506-517 are compositionally biased toward polar residues; it reads LQSQSGTVVTTE. 2 stretches are compositionally biased toward basic and acidic residues: residues 518–530 and 536–551; these read IKTE…ENLH and DDMK…DIKV. K519 participates in a covalent cross-link: Glycyl lysine isopeptide (Lys-Gly) (interchain with G-Cter in SUMO2). S540 is subject to Phosphoserine. K550 is covalently cross-linked (Glycyl lysine isopeptide (Lys-Gly) (interchain with G-Cter in SUMO2)). T557 is modified (phosphothreonine). S558 and S559 each carry phosphoserine. Over residues 568–580 the composition is skewed to basic and acidic residues; that stretch reads PEQKIEREKERRM. A bHLH domain is found at 577 to 630; the sequence is ERRMANNARERLRVRDINEAFKELGRMCQLHLKSEKPQTKLLILHQAVAVILSL. Glycyl lysine isopeptide (Lys-Gly) (interchain with G-Cter in SUMO2) cross-links involve residues K609 and K653. The interval 632-655 is class A specific domain; the sequence is QQVRERNLNPKAACLKRREEEKVS. The segment at 651-682 is disordered; it reads EEKVSAVSAEPPTTLPGTHPGLSETTNPMGHM. The segment covering 661 to 672 has biased composition (low complexity); the sequence is PPTTLPGTHPGL. Over residues 673 to 682 the composition is skewed to polar residues; the sequence is SETTNPMGHM.

In terms of assembly, efficient DNA binding requires dimerization with another bHLH protein. Forms homo- or heterooligomers with myogenin, E12 and ITF2 proteins. Interacts with PTF1A. Interacts with NEUROD2. Interacts with RUNX1T1. Interacts with AML1-MTG8/ETO (via nervy homology region 2 in oligomerized form). Interacts with BHLHA9. In terms of tissue distribution, expressed in several tissues and cell types including skeletal muscle, thymus, and a B-cell line.

Its subcellular location is the nucleus. Functionally, transcriptional regulator. Involved in the initiation of neuronal differentiation. Activates transcription by binding to the E box (5'-CANNTG-3'). May be involved in the functional network that regulates the development of the GnRH axis. The polypeptide is Transcription factor 12 (TCF12) (Homo sapiens (Human)).